Here is a 57-residue protein sequence, read N- to C-terminus: Large ribosomal subunit protein bL32c (57 aa).

It belongs to the bacterial ribosomal protein bL32 family.

The protein resides in the plastid. The protein localises to the chloroplast. The sequence is that of Large ribosomal subunit protein bL32c from Amborella trichopoda.